Reading from the N-terminus, the 380-residue chain is Heme A synthase (380 aa).

8 consecutive transmembrane segments (helical) span residues 36 to 56 (IRAW…VGGL), 125 to 145 (VIGL…KIPA), 151 to 171 (LILP…MVAS), 187 to 207 (LATH…SILQ), 227 to 247 (FGLA…GALV), 287 to 307 (LVQF…VMVW), 320 to 340 (FAFN…IVTV), and 344 to 364 (APWQ…VLIL). Position 292 (H292) interacts with heme. Residue H352 participates in heme binding.

It belongs to the COX15/CtaA family. Type 2 subfamily. In terms of assembly, interacts with CtaB. Heme b serves as cofactor.

It localises to the cell membrane. The enzyme catalyses Fe(II)-heme o + 2 A + H2O = Fe(II)-heme a + 2 AH2. The protein operates within porphyrin-containing compound metabolism; heme A biosynthesis; heme A from heme O: step 1/1. Catalyzes the conversion of heme O to heme A by two successive hydroxylations of the methyl group at C8. The first hydroxylation forms heme I, the second hydroxylation results in an unstable dihydroxymethyl group, which spontaneously dehydrates, resulting in the formyl group of heme A. The sequence is that of Heme A synthase from Ruegeria pomeroyi (strain ATCC 700808 / DSM 15171 / DSS-3) (Silicibacter pomeroyi).